We begin with the raw amino-acid sequence, 501 residues long: G protein-activated inward rectifier potassium channel 1 (501 aa).

The disordered stretch occupies residues 1 to 40 (MSALRRKFGDDYQVVTTSSSGSGLQPQGPGQGPQQQLVPK). Residues 1-80 (MSALRRKFGD…LFTTLVDLKW (80 aa)) lie on the Cytoplasmic side of the membrane. The span at 18 to 37 (SSSGSGLQPQGPGQGPQQQL) shows a compositional bias: low complexity. A helical membrane pass occupies residues 81-105 (RWNLFIFILTYTVAWLFMASMWWVI). Over 106–129 (AYTRGDLNKAHVGNYTPCVANVYN) the chain is Extracellular. Asn119 carries an N-linked (GlcNAc...) asparagine glycan. The helical; Pore-forming intramembrane region spans 130-141 (FPSAFLFFIETE). An intramembrane region (pore-forming) is located at residues 142-148 (ATIGYGY). The Selectivity filter motif lies at 143-148 (TIGYGY). The Extracellular portion of the chain corresponds to 149–157 (RYITDKCPE). A helical membrane pass occupies residues 158–179 (GIILFLFQSILGSIVDAFLIGC). Topologically, residues 180 to 501 (MFIKMSQPKK…LRKMNSDRFT (322 aa)) are cytoplasmic. The tract at residues 182-209 (IKMSQPKKRAETLMFSEHAVISMRDGKL) is polyphosphoinositide (PIP2)-binding. Residues Ser385 and Ser424 each carry the phosphoserine modification.

It belongs to the inward rectifier-type potassium channel (TC 1.A.2.1) family. KCNJ3 subfamily. Associates with KCNJ5/GIRK4 or KCNJ6/GIRK2 or KCNJ9/GIRK3 to form a G-protein activated heteromultimer pore-forming unit. The resulting inward current is much larger.

The protein localises to the membrane. The catalysed reaction is K(+)(in) = K(+)(out). With respect to regulation, heteromultimer composed of KCNJ3/GIRK1 and KCNJ5/GIRK4 is activated by phosphatidylinositol 4,5 biphosphate (PtdIns(4,5)P2). Inward rectifier potassium channels are characterized by a greater tendency to allow potassium to flow into the cell rather than out of it. Their voltage dependence is regulated by the concentration of extracellular potassium; as external potassium is raised, the voltage range of the channel opening shifts to more positive voltages. The inward rectification is mainly due to the blockage of outward current by internal magnesium. This potassium channel is controlled by G proteins. This receptor plays a crucial role in regulating the heartbeat. The chain is G protein-activated inward rectifier potassium channel 1 (KCNJ3) from Bos taurus (Bovine).